The primary structure comprises 160 residues: 6,7-dimethyl-8-ribityllumazine synthase (160 aa).

5-amino-6-(D-ribitylamino)uracil contacts are provided by residues Phe28, Ala62–Glu64, and Ala86–Ile88. Position 91–92 (Glu91–Thr92) interacts with (2S)-2-hydroxy-3-oxobutyl phosphate. His94 serves as the catalytic Proton donor. 5-amino-6-(D-ribitylamino)uracil is bound at residue Asn119. Residue Arg133 participates in (2S)-2-hydroxy-3-oxobutyl phosphate binding.

The protein belongs to the DMRL synthase family.

It carries out the reaction (2S)-2-hydroxy-3-oxobutyl phosphate + 5-amino-6-(D-ribitylamino)uracil = 6,7-dimethyl-8-(1-D-ribityl)lumazine + phosphate + 2 H2O + H(+). It participates in cofactor biosynthesis; riboflavin biosynthesis; riboflavin from 2-hydroxy-3-oxobutyl phosphate and 5-amino-6-(D-ribitylamino)uracil: step 1/2. In terms of biological role, catalyzes the formation of 6,7-dimethyl-8-ribityllumazine by condensation of 5-amino-6-(D-ribitylamino)uracil with 3,4-dihydroxy-2-butanone 4-phosphate. This is the penultimate step in the biosynthesis of riboflavin. The polypeptide is 6,7-dimethyl-8-ribityllumazine synthase (Nitrosospira multiformis (strain ATCC 25196 / NCIMB 11849 / C 71)).